We begin with the raw amino-acid sequence, 179 residues long: ATP synthase subunit delta (179 aa).

Belongs to the ATPase delta chain family. F-type ATPases have 2 components, F(1) - the catalytic core - and F(0) - the membrane proton channel. F(1) has five subunits: alpha(3), beta(3), gamma(1), delta(1), epsilon(1). F(0) has three main subunits: a(1), b(2) and c(10-14). The alpha and beta chains form an alternating ring which encloses part of the gamma chain. F(1) is attached to F(0) by a central stalk formed by the gamma and epsilon chains, while a peripheral stalk is formed by the delta and b chains.

Its subcellular location is the cell membrane. F(1)F(0) ATP synthase produces ATP from ADP in the presence of a proton or sodium gradient. F-type ATPases consist of two structural domains, F(1) containing the extramembraneous catalytic core and F(0) containing the membrane proton channel, linked together by a central stalk and a peripheral stalk. During catalysis, ATP synthesis in the catalytic domain of F(1) is coupled via a rotary mechanism of the central stalk subunits to proton translocation. Functionally, this protein is part of the stalk that links CF(0) to CF(1). It either transmits conformational changes from CF(0) to CF(1) or is implicated in proton conduction. This is ATP synthase subunit delta from Clostridium botulinum (strain Langeland / NCTC 10281 / Type F).